Here is a 231-residue protein sequence, read N- to C-terminus: Ribonuclease 3 (231 aa).

The 130-residue stretch at 5-134 (QKGIKEDFGI…FIGALYKDQG (130 aa)) folds into the RNase III domain. Glutamate 47 serves as a coordination point for Mg(2+). Aspartate 51 is an active-site residue. Mg(2+) is bound by residues aspartate 120 and glutamate 123. Glutamate 123 is a catalytic residue. Residues 160–230 (DYKSKLQELL…AKKAYQDVTP (71 aa)) enclose the DRBM domain.

Belongs to the ribonuclease III family. In terms of assembly, homodimer. It depends on Mg(2+) as a cofactor.

The protein resides in the cytoplasm. The enzyme catalyses Endonucleolytic cleavage to 5'-phosphomonoester.. Its function is as follows. Digests double-stranded RNA. Involved in the processing of primary rRNA transcript to yield the immediate precursors to the large and small rRNAs (23S and 16S). Processes some mRNAs, and tRNAs when they are encoded in the rRNA operon. Processes pre-crRNA and tracrRNA of type II CRISPR loci if present in the organism. The sequence is that of Ribonuclease 3 from Oenococcus oeni (strain ATCC BAA-331 / PSU-1).